The following is a 154-amino-acid chain: 6,7-dimethyl-8-ribityllumazine synthase (154 aa).

Residues F22, 56 to 58 (AFE), and 80 to 82 (AVI) each bind 5-amino-6-(D-ribitylamino)uracil. 85-86 (AT) provides a ligand contact to (2S)-2-hydroxy-3-oxobutyl phosphate. Catalysis depends on H88, which acts as the Proton donor. Position 113 (F113) interacts with 5-amino-6-(D-ribitylamino)uracil. Residue R127 coordinates (2S)-2-hydroxy-3-oxobutyl phosphate.

It belongs to the DMRL synthase family. Forms an icosahedral capsid composed of 60 subunits, arranged as a dodecamer of pentamers.

The enzyme catalyses (2S)-2-hydroxy-3-oxobutyl phosphate + 5-amino-6-(D-ribitylamino)uracil = 6,7-dimethyl-8-(1-D-ribityl)lumazine + phosphate + 2 H2O + H(+). It participates in cofactor biosynthesis; riboflavin biosynthesis; riboflavin from 2-hydroxy-3-oxobutyl phosphate and 5-amino-6-(D-ribitylamino)uracil: step 1/2. Catalyzes the formation of 6,7-dimethyl-8-ribityllumazine by condensation of 5-amino-6-(D-ribitylamino)uracil with 3,4-dihydroxy-2-butanone 4-phosphate. This is the penultimate step in the biosynthesis of riboflavin. This chain is 6,7-dimethyl-8-ribityllumazine synthase, found in Geobacillus kaustophilus (strain HTA426).